The sequence spans 726 residues: Peroxisomal bifunctional enzyme (726 aa).

Residues 1 to 284 (MAEYLRLPHS…FAERSAPKWS (284 aa)) form an enoyl-CoA hydratase / isomerase region. K38 is subject to N6-succinyllysine. Substrate is bound at residue G103. K167 carries the N6-acetyllysine; alternate modification. K167 carries the N6-succinyllysine; alternate modification. K173 bears the N6-acetyllysine mark. K185 is subject to N6-succinyllysine. N6-acetyllysine; alternate is present on K221. K221 bears the N6-succinyllysine; alternate mark. 3 positions are modified to N6-succinyllysine: K282, K292, and K333. Residues 285 to 575 (TPSGASWKTA…DMLCELGRFG (291 aa)) are 3-hydroxyacyl-CoA dehydrogenase. Residues K348 and K352 each carry the N6-acetyllysine modification. The interval 352-371 (KSRQQCGQQRSGPKPRFSSS) is disordered. Positions 353–371 (SRQQCGQQRSGPKPRFSSS) are enriched in polar residues. At K467 the chain carries N6-acetyllysine. Position 535 is an N6-succinyllysine (K535). 3 positions are modified to N6-acetyllysine; alternate: K587, K594, and K713. K587, K594, and K713 each carry N6-succinyllysine; alternate. Positions 724–726 (SKL) match the Microbody targeting signal motif. K725 is modified (N6-succinyllysine).

In the N-terminal section; belongs to the enoyl-CoA hydratase/isomerase family. This sequence in the C-terminal section; belongs to the 3-hydroxyacyl-CoA dehydrogenase family. As to quaternary structure, monomer. Acetylated, leading to enhanced enzyme activity. Acetylation is enhanced by up to 80% after treatment either with trichostin A (TSA) or with nicotinamide (NAM) with highest increase on Lys-348. Acetylation and enzyme activity increased by about 1.5% on addition of fatty acids.

The protein localises to the peroxisome. The catalysed reaction is a (3S)-3-hydroxyacyl-CoA = a (2E)-enoyl-CoA + H2O. It catalyses the reaction a 4-saturated-(3S)-3-hydroxyacyl-CoA = a (3E)-enoyl-CoA + H2O. It carries out the reaction a (3Z)-enoyl-CoA = a 4-saturated (2E)-enoyl-CoA. The enzyme catalyses a (3E)-enoyl-CoA = a 4-saturated (2E)-enoyl-CoA. The catalysed reaction is a (3S)-3-hydroxyacyl-CoA + NAD(+) = a 3-oxoacyl-CoA + NADH + H(+). It catalyses the reaction (2S,3S)-3-hydroxy-2-methylbutanoyl-CoA = (2E)-2-methylbut-2-enoyl-CoA + H2O. It carries out the reaction (3S)-hydroxyhexadecanoyl-CoA + NAD(+) = 3-oxohexadecanoyl-CoA + NADH + H(+). The enzyme catalyses (3S)-hydroxyhexadecanoyl-CoA = (2E)-hexadecenoyl-CoA + H2O. The catalysed reaction is (2E)-hexadecenedioyl-CoA + H2O = (3S)-hydroxyhexadecanedioyl-CoA. It catalyses the reaction (3S)-hydroxyhexadecanedioyl-CoA + NAD(+) = 3-oxohexadecanedioyl-CoA + NADH + H(+). It carries out the reaction (3E,5Z)-tetradecadienoyl-CoA = (2E,5Z)-tetradecadienoyl-CoA. The enzyme catalyses (3E,5Z)-octadienoyl-CoA = (2E,5Z)-octadienoyl-CoA. The catalysed reaction is (3S)-hydroxydecanoyl-CoA + NAD(+) = 3-oxodecanoyl-CoA + NADH + H(+). It catalyses the reaction (3E)-decenoyl-CoA = (2E)-decenoyl-CoA. It carries out the reaction (3Z)-hexenoyl-CoA = (2E)-hexenoyl-CoA. The enzyme catalyses (3E)-hexenoyl-CoA = (2E)-hexenoyl-CoA. The catalysed reaction is (3S)-hydroxydecanoyl-CoA = (2E)-decenoyl-CoA + H2O. It catalyses the reaction (3S)-hydroxyhexanoyl-CoA = (2E)-hexenoyl-CoA + H2O. The protein operates within lipid metabolism; fatty acid beta-oxidation. Its activity is regulated as follows. Enzyme activity enhanced by acetylation. In terms of biological role, peroxisomal trifunctional enzyme possessing 2-enoyl-CoA hydratase, 3-hydroxyacyl-CoA dehydrogenase, and delta 3, delta 2-enoyl-CoA isomerase activities. Catalyzes two of the four reactions of the long chain fatty acids peroxisomal beta-oxidation pathway. Can also use branched-chain fatty acids such as 2-methyl-2E-butenoyl-CoA as a substrate, which is hydrated into (2S,3S)-3-hydroxy-2-methylbutanoyl-CoA. Optimal isomerase for 2,5 double bonds into 3,5 form isomerization in a range of enoyl-CoA species. Also able to isomerize both 3-cis and 3-trans double bonds into the 2-trans form in a range of enoyl-CoA species. Regulates the amount of medium-chain dicarboxylic fatty acids which are essential regulators of all fatty acid oxidation pathways. Also involved in the degradation of long-chain dicarboxylic acids through peroxisomal beta-oxidation. In Cavia porcellus (Guinea pig), this protein is Peroxisomal bifunctional enzyme (EHHADH).